A 1764-amino-acid polypeptide reads, in one-letter code: Nucleolar pre-ribosomal-associated protein 1 (1764 aa).

The interval 1-23 is disordered; that stretch reads MSNHSEAYGSRDQRREKYTQGKE. Residues 9-23 are compositionally biased toward basic and acidic residues; that stretch reads GSRDQRREKYTQGKE.

In terms of assembly, associates with pre-60S ribosomal particles. Predominantly associated with the 27SA2 pre-rRNA. Can associate with a subset of box H/ACA and box C/D small nucleolar RNPs (snoRNPs) required for peptidyl transferase center modification and with small RNAs snR37 and snR42. Interacts with URB2. Together with DBP6, NOP8, URB2 and RSA3, forms an RNA-independent complex, which is required during early maturation of nascent 60S ribosomal subunits.

It is found in the nucleus. The protein resides in the nucleolus. In terms of biological role, required for 60S ribosomal subunit formation and pre-rRNA processing. Required for normal accumulation of 25S and 5.8S rRNAs. This Saccharomyces cerevisiae (strain ATCC 204508 / S288c) (Baker's yeast) protein is Nucleolar pre-ribosomal-associated protein 1 (URB1).